A 724-amino-acid chain; its full sequence is Semaphorin-2A (724 aa).

The first 25 residues, 1-25 (MSLLQLSPLLALLLLLCSSVSETAA), serve as a signal peptide directing secretion. The region spanning 45–522 (QGNNNYGKHG…TDHRIKQIDL (478 aa)) is the Sema domain. N-linked (GlcNAc...) asparagine glycosylation occurs at Asn-95. Cys-118 and Cys-129 are joined by a disulfide. 4 N-linked (GlcNAc...) asparagine glycosylation sites follow: Asn-163, Asn-190, Asn-229, and Asn-314. 2 cysteine pairs are disulfide-bonded: Cys-291–Cys-399 and Cys-315–Cys-358. N-linked (GlcNAc...) asparagine glycosylation occurs at Asn-401. 2 disulfide bridges follow: Cys-525–Cys-541 and Cys-535–Cys-550. The region spanning 552 to 663 (PYELDLLQDV…LCSYNITVDA (112 aa)) is the Ig-like C2-type domain. Asn-563 is a glycosylation site (N-linked (GlcNAc...) asparagine). An intrachain disulfide couples Cys-590 to Cys-647. 3 N-linked (GlcNAc...) asparagine glycosylation sites follow: Asn-658, Asn-670, and Asn-708.

Belongs to the semaphorin family. In terms of assembly, interacts with PlexB. In terms of tissue distribution, transiently expressed by a single large muscle during motoneuron outgrowth and synapse formation.

Its subcellular location is the secreted. Ligand for transmembrane receptor PlexB. Plays a role in growth cone guidance. Required for both proper adult behavior and survival. Can function as a selective target-derived signal that inhibits the formation of specific synaptic terminal arbors. Function in neurons is essential for adult survival, motor neuron survival, and is important for climbing behavior and activity. During embryogenesis, plays an important role in correct salivary gland positioning. The sequence is that of Semaphorin-2A from Drosophila melanogaster (Fruit fly).